Reading from the N-terminus, the 325-residue chain is Lipid droplet-associated hydrolase (325 aa).

Serine 139 acts as the Nucleophile in catalysis. Residues aspartate 271 and histidine 300 each act as charge relay system in the active site.

The protein belongs to the AB hydrolase superfamily. LDAH family. In terms of tissue distribution, present in macrophage-rich areas in atherosclerotic lesions (at protein level). Expressed in monocytes and monocyte-derived macrophages (at protein level).

The protein resides in the lipid droplet. It is found in the endoplasmic reticulum. It carries out the reaction a cholesterol ester + H2O = cholesterol + a fatty acid + H(+). Probable serine lipid hydrolase associated with lipid droplets. Has low cholesterol esterase activity. Appears to lack triglyceride lipase activity. Involved in cholesterol and triglyceride homeostasis; has opposing effects, stimulating cellular triglyceride accumulation and cellular cholesterol release. Acts antagonistically with PNPLA2/ATGL in regulation of cellular lipid stores. May regulate triglyceride accumulation indirectly through stimulation of PNPLA2/ATGL ubiquitination and proteasomal degradation. Promotes microtubule-dependent lipid droplet fusion. Highly expressed in macrophage-rich areas in atherosclerotic lesions, suggesting that it could promote cholesterol ester turnover in macrophages. This Homo sapiens (Human) protein is Lipid droplet-associated hydrolase.